Here is a 543-residue protein sequence, read N- to C-terminus: Zinc finger protein 852 (543 aa).

Residues Val-8 to Pro-82 form the KRAB domain. Ser-145 carries the post-translational modification Phosphoserine. 12 consecutive C2H2-type zinc fingers follow at residues Tyr-159 to His-181, Tyr-187 to His-209, Tyr-215 to His-237, Tyr-243 to His-265, Tyr-271 to His-293, Tyr-299 to His-321, Tyr-327 to His-349, Tyr-355 to His-377, Phe-383 to His-405, Tyr-411 to His-433, Tyr-439 to His-461, and Tyr-467 to His-489.

Belongs to the krueppel C2H2-type zinc-finger protein family.

The protein resides in the nucleus. Functionally, may be involved in transcriptional regulation. This Homo sapiens (Human) protein is Zinc finger protein 852 (ZNF852).